A 143-amino-acid chain; its full sequence is Mite group 2 allergen Pso o 2 (143 aa).

The N-terminal stretch at 1-17 (MMKTLVVLAITLAVVSA) is a signal peptide. 3 disulfide bridges follow: cysteine 25–cysteine 134, cysteine 38–cysteine 43, and cysteine 89–cysteine 94.

Belongs to the NPC2 family.

It localises to the secreted. In Psoroptes ovis (Sheep scab mite), this protein is Mite group 2 allergen Pso o 2 (ALLA).